A 260-amino-acid chain; its full sequence is MGLSIHSLRKLKERAQPIVALTATEYAMARILDQAGVDLLLVGDSLSMVALGHTSTLPVTVDELLHHCRAVRRGVERALLVADLPFGSYEQSPQQAFSTATRFLKEAGVQAVKLEGGYPRMTETVAFLTESGIPVLGHLGLTPQAVHQLGGYRVQGKTAQAAERLIDQALALEGAGAFALVLEHIPYDLAGEISGKLVIPTVGIGAGPHCNGQILVTHDLLGLTENPPPFVNPYADLRALISKAVGRYSADVRAHGSREE.

Mg(2+) is bound by residues Asp-44 and Asp-83. 3-methyl-2-oxobutanoate-binding positions include 44–45 (DS), Asp-83, and Lys-113. Glu-115 provides a ligand contact to Mg(2+). Glu-183 functions as the Proton acceptor in the catalytic mechanism.

It belongs to the PanB family. In terms of assembly, homodecamer; pentamer of dimers. Mg(2+) serves as cofactor.

It is found in the cytoplasm. The enzyme catalyses 3-methyl-2-oxobutanoate + (6R)-5,10-methylene-5,6,7,8-tetrahydrofolate + H2O = 2-dehydropantoate + (6S)-5,6,7,8-tetrahydrofolate. The protein operates within cofactor biosynthesis; (R)-pantothenate biosynthesis; (R)-pantoate from 3-methyl-2-oxobutanoate: step 1/2. In terms of biological role, catalyzes the reversible reaction in which hydroxymethyl group from 5,10-methylenetetrahydrofolate is transferred onto alpha-ketoisovalerate to form ketopantoate. This is 3-methyl-2-oxobutanoate hydroxymethyltransferase from Gloeobacter violaceus (strain ATCC 29082 / PCC 7421).